The chain runs to 376 residues: 1-deoxy-D-xylulose 5-phosphate reductoisomerase (376 aa).

7 residues coordinate NADPH: threonine 12, glycine 13, serine 14, isoleucine 15, arginine 39, glutamine 40, and asparagine 110. Lysine 111 is a 1-deoxy-D-xylulose 5-phosphate binding site. Glutamate 112 serves as a coordination point for NADPH. Aspartate 136 serves as a coordination point for Mn(2+). Positions 137, 138, 162, and 185 each coordinate 1-deoxy-D-xylulose 5-phosphate. Glutamate 138 lines the Mn(2+) pocket. Glycine 191 is a binding site for NADPH. 4 residues coordinate 1-deoxy-D-xylulose 5-phosphate: serine 198, asparagine 203, lysine 204, and glutamate 207. Glutamate 207 provides a ligand contact to Mn(2+).

It belongs to the DXR family. Requires Mg(2+) as cofactor. Mn(2+) serves as cofactor.

The enzyme catalyses 2-C-methyl-D-erythritol 4-phosphate + NADP(+) = 1-deoxy-D-xylulose 5-phosphate + NADPH + H(+). Its pathway is isoprenoid biosynthesis; isopentenyl diphosphate biosynthesis via DXP pathway; isopentenyl diphosphate from 1-deoxy-D-xylulose 5-phosphate: step 1/6. In terms of biological role, catalyzes the NADPH-dependent rearrangement and reduction of 1-deoxy-D-xylulose-5-phosphate (DXP) to 2-C-methyl-D-erythritol 4-phosphate (MEP). The protein is 1-deoxy-D-xylulose 5-phosphate reductoisomerase of Treponema pallidum (strain Nichols).